A 154-amino-acid chain; its full sequence is ATP synthase subunit b (154 aa).

A helical membrane pass occupies residues 9-29 (AIAFVIFVWFCMKYVWPPLMA).

Belongs to the ATPase B chain family. In terms of assembly, F-type ATPases have 2 components, F(1) - the catalytic core - and F(0) - the membrane proton channel. F(1) has five subunits: alpha(3), beta(3), gamma(1), delta(1), epsilon(1). F(0) has three main subunits: a(1), b(2) and c(10-14). The alpha and beta chains form an alternating ring which encloses part of the gamma chain. F(1) is attached to F(0) by a central stalk formed by the gamma and epsilon chains, while a peripheral stalk is formed by the delta and b chains.

It localises to the cell inner membrane. Its function is as follows. F(1)F(0) ATP synthase produces ATP from ADP in the presence of a proton or sodium gradient. F-type ATPases consist of two structural domains, F(1) containing the extramembraneous catalytic core and F(0) containing the membrane proton channel, linked together by a central stalk and a peripheral stalk. During catalysis, ATP synthesis in the catalytic domain of F(1) is coupled via a rotary mechanism of the central stalk subunits to proton translocation. Functionally, component of the F(0) channel, it forms part of the peripheral stalk, linking F(1) to F(0). The sequence is that of ATP synthase subunit b from Klebsiella pneumoniae subsp. pneumoniae (strain ATCC 700721 / MGH 78578).